The primary structure comprises 576 residues: Sulfite reductase [NADPH] hemoprotein beta-component (576 aa).

A compositionally biased stretch (basic and acidic residues) spans 1-12; it reads MDAKTQPDRSRD. The interval 1–26 is disordered; sequence MDAKTQPDRSRDVSQPLDKLGPDETL. [4Fe-4S] cluster-binding residues include Cys441, Cys447, Cys486, and Cys490. Position 490 (Cys490) interacts with siroheme.

This sequence belongs to the nitrite and sulfite reductase 4Fe-4S domain family. In terms of assembly, alpha(8)-beta(8). The alpha component is a flavoprotein, the beta component is a hemoprotein. Siroheme is required as a cofactor. Requires [4Fe-4S] cluster as cofactor.

The catalysed reaction is hydrogen sulfide + 3 NADP(+) + 3 H2O = sulfite + 3 NADPH + 4 H(+). It participates in sulfur metabolism; hydrogen sulfide biosynthesis; hydrogen sulfide from sulfite (NADPH route): step 1/1. Its function is as follows. Component of the sulfite reductase complex that catalyzes the 6-electron reduction of sulfite to sulfide. This is one of several activities required for the biosynthesis of L-cysteine from sulfate. In Nitrobacter winogradskyi (strain ATCC 25391 / DSM 10237 / CIP 104748 / NCIMB 11846 / Nb-255), this protein is Sulfite reductase [NADPH] hemoprotein beta-component.